Consider the following 395-residue polypeptide: MAKAKFERSKPHVNIGTIGHVDHGKTTLTAAITTVLAKAGGAEARGYDQIDAAPEERERGITISTAHVEYETETRHYAHVDCPGHADYVKNMITGAAQMDGGILVVSAADGPMPQTREHILLSRQVGVPYIVVFLNKCDMVDDEELLELVEMEVRDLLSEYGFPGDDIPVIKGSALKALQGEADWEAKIIELMAEVDAYIPTPERETDKPFLMPVEDVFSITGRGTVATGRVERGIVKVGDVVEIIGLAEENASTTVTGVEMFRKLLDQAQAGDNIGALLRGVAREDIQRGQVLAKSGSVKAHAKFKAEVFVLSKEEGGRHTPFFANYRPQFYFRTTDVTGIIQLPEGTEMVMPGDNIEMTIELIAPIAIEEGTKFSIREGGRTVGYGVVATIVE.

The 195-residue stretch at 10–204 (KPHVNIGTIG…EVDAYIPTPE (195 aa)) folds into the tr-type G domain. Positions 19–26 (GHVDHGKT) are G1. 19–26 (GHVDHGKT) lines the GTP pocket. A Mg(2+)-binding site is contributed by Thr26. Residues 60–64 (GITIS) form a G2 region. Residues 81 to 84 (DCPG) are G3. GTP is bound by residues 81–85 (DCPGH) and 136–139 (NKCD). Residues 136 to 139 (NKCD) form a G4 region. Residues 174–176 (SAL) form a G5 region.

This sequence belongs to the TRAFAC class translation factor GTPase superfamily. Classic translation factor GTPase family. EF-Tu/EF-1A subfamily. Monomer.

It is found in the cytoplasm. The enzyme catalyses GTP + H2O = GDP + phosphate + H(+). GTP hydrolase that promotes the GTP-dependent binding of aminoacyl-tRNA to the A-site of ribosomes during protein biosynthesis. The polypeptide is Elongation factor Tu (Bacillus anthracis (strain A0248)).